Consider the following 1087-residue polypeptide: Exoglucanase XynX (1087 aa).

The signal sequence occupies residues 1 to 30 (MKNNLSKFVSIFTAFIMIFGTSLFFPHVSA). In terms of domain architecture, CBM-cenC spans 37–188 (ANLVSNGDFE…YIDDVVVTPQ (152 aa)). The region spanning 204 to 527 (QNDIPDLSSV…KPAYWAIADP (324 aa)) is the GH10 domain. The active-site Proton donor is E347. D389 is a catalytic residue. Residue E452 is the Nucleophile of the active site. SLH domains lie at 903–966 (KKSV…YNGE), 967–1025 (FSDV…KEEN), and 1028–1087 (ATSF…SNNL).

Belongs to the glycosyl hydrolase 10 (cellulase F) family.

It carries out the reaction Hydrolysis of (1-&gt;4)-beta-D-glucosidic linkages in cellulose and cellotetraose, releasing cellobiose from the non-reducing ends of the chains.. The polypeptide is Exoglucanase XynX (xynX) (Acetivibrio thermocellus (Hungateiclostridium thermocellum)).